Consider the following 186-residue polypeptide: Zein-alpha PZ19.1 (186 aa).

An N-terminal signal peptide occupies residues 1–21 (MAAKIFCLIMLLGLSASAATA).

This sequence belongs to the zein family.

Functionally, zeins are major seed storage proteins. This Zea mays (Maize) protein is Zein-alpha PZ19.1.